Here is a 254-residue protein sequence, read N- to C-terminus: Dolichol-phosphate mannosyltransferase subunit 1 (254 aa).

GDP-alpha-D-mannose contacts are provided by P25, Y27, E29, V56, D58, D111, A112, D113, R140, and R227. D113 contacts Mg(2+). Residue D113 coordinates Mn(2+).

This sequence belongs to the glycosyltransferase 2 family. In terms of assembly, component of the dolichol-phosphate mannose (DPM) synthase complex composed of dpm1, dpm2 and dpm3. Requires Mg(2+) as cofactor. The cofactor is Mn(2+). Ca(2+) is required as a cofactor.

The protein resides in the endoplasmic reticulum. It catalyses the reaction a di-trans,poly-cis-dolichyl phosphate + GDP-alpha-D-mannose = a di-trans,poly-cis-dolichyl beta-D-mannosyl phosphate + GDP. The protein operates within protein modification; protein glycosylation. Functionally, transfers mannose from GDP-mannose to dolichol monophosphate to form dolichol phosphate mannose (Dol-P-Man) which is the mannosyl donor in pathways leading to N-glycosylation, glycosyl phosphatidylinositol membrane anchoring, and O-mannosylation of proteins; catalytic subunit of the dolichol-phosphate mannose (DPM) synthase complex. In Dictyostelium discoideum (Social amoeba), this protein is Dolichol-phosphate mannosyltransferase subunit 1 (dpm1).